A 563-amino-acid chain; its full sequence is Coiled-coil domain-containing protein 38 (563 aa).

Coiled coils occupy residues 129-212 (KRNT…KTEF), 384-415 (NIEFLLEQEEMLKANCVREEEKAAELQLRSRL), and 485-522 (ERMKQKERRQKFRDEKMREKQRHQEERLKAALEKAVAQ). The disordered stretch occupies residues 521–550 (AQPKKKLGRRLVYHSKPPSANKQQLPLVNE). Residues 523-533 (PKKKLGRRLVY) show a composition bias toward basic residues.

In terms of assembly, interacts with CCDC42, CFAP53, IFT88 and ODF2. Interacts with CCDC146. Interacts with TEKT3. Interacts with ubiquitinated histone H2A.

It is found in the cytoplasm. It localises to the cytoskeleton. The protein localises to the microtubule organizing center. The protein resides in the centrosome. Its subcellular location is the perinuclear region. It is found in the cell projection. It localises to the cilium. The protein localises to the flagellum. In terms of biological role, essential for male fertility. Required for sperm flagellum biogenesis. Also required for acrosome biogenesis. Required for the attachment of developing acrosomes to the nucleus during spermiogenesis and may be involved in the transport of fibrous sheath components. The polypeptide is Coiled-coil domain-containing protein 38 (CCDC38) (Macaca fascicularis (Crab-eating macaque)).